Reading from the N-terminus, the 335-residue chain is Beta-ketoacyl-[acyl-carrier-protein] synthase III (335 aa).

Catalysis depends on residues Cys-119 and His-261. The segment at 262-266 (QANQR) is ACP-binding. Asn-291 is a catalytic residue.

Belongs to the thiolase-like superfamily. FabH family. Homodimer.

Its subcellular location is the cytoplasm. The enzyme catalyses malonyl-[ACP] + acetyl-CoA + H(+) = 3-oxobutanoyl-[ACP] + CO2 + CoA. Its pathway is lipid metabolism; fatty acid biosynthesis. Its function is as follows. Catalyzes the condensation reaction of fatty acid synthesis by the addition to an acyl acceptor of two carbons from malonyl-ACP. Catalyzes the first condensation reaction which initiates fatty acid synthesis and may therefore play a role in governing the total rate of fatty acid production. Possesses both acetoacetyl-ACP synthase and acetyl transacylase activities. Its substrate specificity determines the biosynthesis of branched-chain and/or straight-chain of fatty acids. This Prochlorococcus marinus (strain MIT 9515) protein is Beta-ketoacyl-[acyl-carrier-protein] synthase III.